Reading from the N-terminus, the 190-residue chain is Dual specificity protein phosphatase 21 (190 aa).

One can recognise a Tyrosine-protein phosphatase domain in the interval 21–162; sequence SFSQITRSLF…LINYEFKLFN (142 aa). Residues 43-128 form a sufficient for mitochondrial localization region; the sequence is LSSNRITAIV…AYLMKYHSMS (86 aa). The active-site Phosphocysteine intermediate is the C106.

Belongs to the protein-tyrosine phosphatase family. Non-receptor class dual specificity subfamily. As to quaternary structure, microtubule inner protein component of sperm flagellar doublet microtubules. Expressed in testis.

It localises to the cytoplasm. The protein localises to the nucleus. The protein resides in the mitochondrion inner membrane. It is found in the cytoskeleton. Its subcellular location is the flagellum axoneme. The enzyme catalyses O-phospho-L-tyrosyl-[protein] + H2O = L-tyrosyl-[protein] + phosphate. It carries out the reaction O-phospho-L-seryl-[protein] + H2O = L-seryl-[protein] + phosphate. The catalysed reaction is O-phospho-L-threonyl-[protein] + H2O = L-threonyl-[protein] + phosphate. Its function is as follows. Protein phosphatase component of the sperm flagellar doublet microtubules. May act as a regulator of sperm motility by mediating dephosphorylation of sperm doublet microtubule proteins. Can dephosphorylate single and diphosphorylated synthetic MAPK peptides, with preference for the phosphotyrosine and diphosphorylated forms over phosphothreonine. This chain is Dual specificity protein phosphatase 21 (DUSP21), found in Homo sapiens (Human).